A 78-amino-acid polypeptide reads, in one-letter code: Antitoxin VapB2 (78 aa).

The SpoVT-AbrB domain occupies 4 to 44 (AKIFMNGQSQAVRLPKEFRFSVKEVSVIPLGKGIVLQPLPN).

Belongs to the VapB family. Forms complexes with VapC2; probably VapC2(4):VapB2(2) in the absence of DNA, and VapC2(4):VapB2(4) in the presence of DNA. Crystallizes as heterodimers with stoichiometry VapC2(4):VapB2(4) in the presence of its probable promoter DNA. The heterodimers are in contact via alternative VapC-VapC and VapB-VapB interactions. This subunit contacts DNA.

Its function is as follows. Antitoxin component of a type II toxin-antitoxin (TA) system. Upon expression in E.coli or S.cerevisiae neutralizes the effect of cognate toxin VapC2, partially inhibits the RNase activity of VapC2. The polypeptide is Antitoxin VapB2 (vapB2) (Rickettsia felis (strain ATCC VR-1525 / URRWXCal2) (Rickettsia azadi)).